The sequence spans 185 residues: Elongation factor P (185 aa).

Belongs to the elongation factor P family.

It localises to the cytoplasm. It functions in the pathway protein biosynthesis; polypeptide chain elongation. Its function is as follows. Involved in peptide bond synthesis. Stimulates efficient translation and peptide-bond synthesis on native or reconstituted 70S ribosomes in vitro. Probably functions indirectly by altering the affinity of the ribosome for aminoacyl-tRNA, thus increasing their reactivity as acceptors for peptidyl transferase. The polypeptide is Elongation factor P (Rippkaea orientalis (strain PCC 8801 / RF-1) (Cyanothece sp. (strain PCC 8801))).